Consider the following 525-residue polypeptide: Probable malate:quinone oxidoreductase (525 aa).

It belongs to the MQO family. It depends on FAD as a cofactor.

It carries out the reaction (S)-malate + a quinone = a quinol + oxaloacetate. It participates in carbohydrate metabolism; tricarboxylic acid cycle; oxaloacetate from (S)-malate (quinone route): step 1/1. This chain is Probable malate:quinone oxidoreductase, found in Serratia proteamaculans (strain 568).